The following is a 1023-amino-acid chain: Solute carrier family 12 member 3 (1023 aa).

Residues 1-134 (MELPGDGVHL…EPPPEPPRFG (134 aa)) are Cytoplasmic-facing. The tract at residues 91–131 (DPEQDDFKPPMYEETAGERMGGGDSSEEEEEEHKEPPPEPP) is disordered. The chain crosses the membrane as a discontinuously helical span at residues 135–164 (WVQGVMIRCMLNIWGVILYLRLPWITAQAG). Na(+) contacts are provided by Leu145 and Trp148. The helical transmembrane segment at 165-186 (IGLTWVIILLSSFITGITGLST) threads the bilayer. Over 187–217 (SAIATNGKVKGGGTYFLISRSLGPELGGSIG) the chain is Cytoplasmic. Residues 218–240 (LIFAFANAVAVAMHTVGFAETVT) form a helical membrane-spanning segment. Residues 241-252 (DLMRENGVVMVD) are Extracellular-facing. 2 consecutive transmembrane segments (helical) span residues 253 to 277 (PIND…AGME) and 278 to 300 (WESK…YIVG). Over 301–335 (TIIPASPQKQAKGFFSYKAEIFAANFVPGWRGKEG) the chain is Extracellular. Residues 336-357 (SFFGMFSIFFPSATGILAGANI) form a discontinuously helical membrane-spanning segment. Chloride is bound by residues Gly350, Ile351, and Leu352. Residues 358-368 (SGDLKDPTVAI) are Cytoplasmic-facing. The chain crosses the membrane as a helical span at residues 369-390 (PRGTLMAIFWTTISYLIISATI). Over 391–452 (GACVVRDASG…YQSMSLVSAF (62 aa)) the chain is Extracellular. 2 N-linked (GlcNAc...) asparagine glycosylation sites follow: Asn403 and Asn414. 2 disulfide bridges follow: Cys415–Cys420 and Cys429–Cys435. Asn432 is a glycosylation site (N-linked (GlcNAc...) asparagine). Residues 453-476 (APLISAGIFGATLSSALACLVSAP) traverse the membrane as a helical segment. Na(+)-binding residues include Ala463, Ser466, and Ser467. Residues 477 to 506 (KVFQCLCKDQLYPLIGFFGKGYGKNAEPLR) lie on the Cytoplasmic side of the membrane. Residues 507 to 521 (AYLLTYVIAVCFVLI) form a helical membrane-spanning segment. At 522 to 526 (AELNT) the chain is on the extracellular side. A helical transmembrane segment spans residues 527–543 (IAPIISNFFLCSYALIN). Tyr539 provides a ligand contact to chloride. Residues 544 to 566 (FSCFHASVTNSPGWRPSFRFYSK) lie on the Cytoplasmic side of the membrane. A run of 2 helical transmembrane segments spans residues 567–586 (WLSL…LTWW) and 587–598 (AALIAFGVVFFL). At 599 to 1023 (LGYTLYKKPA…QENVLTFYCQ (425 aa)) the chain is on the cytoplasmic side. The scissor helix stretch occupies residues 614–629 (SVQASSYSMALNQCVG). ATP is bound by residues Leu647, Arg654, Val676, Gly733, and Leu772.

The protein belongs to the SLC12A transporter family. As to quaternary structure, homodimer; adopts a domain-swap conformation at the scissor helices connecting the transmembrane domain and C-terminal domain. As to expression, expressed in urinary bladder, intestine, ovary, skeletal muscle, eye, brain, and kidney.

Its subcellular location is the cell membrane. It carries out the reaction chloride(out) + Na(+)(out) = chloride(in) + Na(+)(in). Its activity is regulated as follows. Inhibited by thiazide-type diuretics including polythiazide, metolazone, cyclothiazide, hydrochlorothiazide and chlorthalidone. Thiazide drugs, specifically inhibit SLC12A3/NCC transporter activity by competing with chloride for binding. Its function is as follows. Electroneutral sodium and chloride ion cotransporter, with a coupling ratio 1 Na(+):1 Cl(-). Mediates sodium and chloride reabsorption. This Pseudopleuronectes americanus (Winter flounder) protein is Solute carrier family 12 member 3 (slc12a3).